Here is a 571-residue protein sequence, read N- to C-terminus: Urease subunit alpha (571 aa).

The 439-residue stretch at 133-571 (GGVDSHIHFI…LPLAQRYFLF (439 aa)) folds into the Urease domain. Residues His138, His140, and Lys221 each contribute to the Ni(2+) site. Lys221 bears the N6-carboxylysine mark. His223 provides a ligand contact to substrate. The Ni(2+) site is built by His250 and His276. Catalysis depends on His324, which acts as the Proton donor. Asp364 contributes to the Ni(2+) binding site.

The protein belongs to the metallo-dependent hydrolases superfamily. Urease alpha subunit family. As to quaternary structure, heterotrimer of UreA (gamma), UreB (beta) and UreC (alpha) subunits. Three heterotrimers associate to form the active enzyme. Ni cation is required as a cofactor. Post-translationally, carboxylation allows a single lysine to coordinate two nickel ions.

The protein localises to the cytoplasm. It catalyses the reaction urea + 2 H2O + H(+) = hydrogencarbonate + 2 NH4(+). Its pathway is nitrogen metabolism; urea degradation; CO(2) and NH(3) from urea (urease route): step 1/1. The sequence is that of Urease subunit alpha from Anaeromyxobacter sp. (strain Fw109-5).